We begin with the raw amino-acid sequence, 640 residues long: MELTPLIRDKSRLSDFLKDIPNDPGCYLMKDGEDRLLYVGKSKKLRNRVRSYFRSGNELSPRISLMVRQVADIELIVTDNESEALTLESNLIKSHQPYFNVLLKDDKKYPYVCITWGDKYPRIFLTRKRRQRQLKDKYYGPYVDVYLLRQTLFSIKKLFPLRQRRIPLYKDRTCLNYSIGRCPGVCQEEISSEDYKNTLKRVEMIFQGRTDELRILLEKQMISFSESLKFEEAGSVRDQLKGIDRLYESQKMIIPDSSVCRDIIAMASEENISSVQIFQMRSGKLIGRLGYFSDNSNFNSSQILQQVIENHYSNVDPVEIPSEILVQHQLVNNILISDWLSEIKKQKVNINVPKRSRKAEIIKLVEKNANLELQRIKQSQDKNLVELDDLTNILDLENIPKRIECYDISHIQGSDAVASQVVFIDGIAARQHYRRYKIKSPNIKIGHSDDFESMAEVITRRFRRWARFKEEGGDIDALLSNESSVLDNLNLNDWPDLVVIDGGKGQLSSVVAALEGLKLDQNLNVISLAKKKEEVFIPKVKQSLVTESNQPGMLLLRRLRDEAHRFAITFHRQKRSQRMKRSQLNEIPGLGPQRIKLLLEHFRSIEAIQMATFSELSSTPGLGRSTAVVIRNYFHPDKNI.

The GIY-YIG domain occupies 22 to 101 (NDPGCYLMKD…IKSHQPYFNV (80 aa)). One can recognise a UVR domain in the interval 211-246 (DELRILLEKQMISFSESLKFEEAGSVRDQLKGIDRL).

The protein belongs to the UvrC family. Interacts with UvrB in an incision complex.

The protein localises to the cytoplasm. Functionally, the UvrABC repair system catalyzes the recognition and processing of DNA lesions. UvrC both incises the 5' and 3' sides of the lesion. The N-terminal half is responsible for the 3' incision and the C-terminal half is responsible for the 5' incision. The polypeptide is UvrABC system protein C (Prochlorococcus marinus (strain NATL2A)).